The chain runs to 403 residues: Aloesone synthase (403 aa).

C174 is a catalytic residue. Residues S281 and 318-321 (GGRA) contribute to the CoA site.

Belongs to the thiolase-like superfamily. Chalcone/stilbene synthases family. Homodimer.

It participates in secondary metabolite biosynthesis; flavonoid biosynthesis. Its function is as follows. Catalyzes the iterative condensations of 6, 7 or 8 molecules of malonyl-CoA to produce various aromatic polyketides. Produces the heptaketide aloesone, the aglycone of aloesin, from 7 molecules of malonyl-CoA as a major product. Also able to produce a hexaketide pyrone, a heptaketide 6-(2-acetyl-3,5-dihydroxybenzyl)-4-hydroxy-2-pyrone, a novel heptaketide 6-(2-(2,4-dihydroxy-6-methylphenyl)-2-oxoethyl)-4-hydroxy-2-pyrone and octaketides SEK4/SEK4b. In Aloe arborescens (Kidachi aloe), this protein is Aloesone synthase (PKS3).